Here is a 323-residue protein sequence, read N- to C-terminus: CYFIP-related Rac1 interactor A (323 aa).

The protein belongs to the CYRI family. Interacts with RAC1 (GTP-bound form preferentially).

Its subcellular location is the membrane. In terms of biological role, may negatively regulate RAC1 signaling and RAC1-driven cytoskeletal remodeling. May regulate chemotaxis, cell migration and epithelial polarization by controlling the polarity, plasticity, duration and extent of protrusions. The protein is CYFIP-related Rac1 interactor A (CYRIA) of Bos taurus (Bovine).